The primary structure comprises 199 residues: NAD(P)H dehydrogenase (quinone) (199 aa).

A Flavodoxin-like domain is found at 4 to 190 (VLVLYYSMYG…AIARFQGKHV (187 aa)). FMN-binding positions include 10–15 (SMYGHI) and 79–81 (TRF). NAD(+) is bound at residue tyrosine 12. Tryptophan 99 contributes to the substrate binding site. Residues 114–119 (STGTGG) and histidine 134 contribute to the FMN site.

The protein belongs to the WrbA family. The cofactor is FMN.

It carries out the reaction a quinone + NADH + H(+) = a quinol + NAD(+). The enzyme catalyses a quinone + NADPH + H(+) = a quinol + NADP(+). This chain is NAD(P)H dehydrogenase (quinone), found in Marinobacter nauticus (strain ATCC 700491 / DSM 11845 / VT8) (Marinobacter aquaeolei).